A 341-amino-acid polypeptide reads, in one-letter code: MEPAFGEVNQLGGVFVNGRPLPNAIRLRIVELAQLGIRPCDISRQLRVSHGCVSKILARYNETGSILPGAIGGSKPRVTTPTVVKHIRTYKQRDPGIFAWEIRDRLLADGVCDKYNVPSVSSISRILRNKIGNLAQQGHYDSYKQHQPAPQPALPYNHIYSYPSPISAAAAKVPTPPGVPAIPGSVAMPRTWPSSHSVTDILGIRSITDQVSDSSPYHSPKVEEWSSLGRNNFPAAAPHAVNGLEKGALEQEAKYGQAPNGLPAVSSFVSASSMAPYPTPAQVSPYMTYSAAPSGYVAGHGWQHAGGTPLSPHNCDIPASLAFKGMQAAREGSHSVTASAL.

Positions 4-130 (AFGEVNQLGG…SSISRILRNK (127 aa)) form a DNA-binding region, paired. The segment at 7–63 (EVNQLGGVFVNGRPLPNAIRLRIVELAQLGIRPCDISRQLRVSHGCVSKILARYNET) is PAI subdomain. Positions 82–130 (TVVKHIRTYKQRDPGIFAWEIRDRLLADGVCDKYNVPSVSSISRILRNK) are RED subdomain. The tract at residues 168 to 189 (AAAAKVPTPPGVPAIPGSVAMP) is interaction with KDM5B.

As to quaternary structure, interacts with KDM5B.

It localises to the nucleus. Its function is as follows. Transcription factor required for normal development of thymus, parathyroid glands, ultimobranchial bodies, teeth, skeletal elements of skull and larynx as well as distal limbs. This is Paired box protein Pax-9 (PAX9) from Perodicticus potto edwarsi (Potto).